A 318-amino-acid chain; its full sequence is MVFFPHRHLIGIKGLTEQDITYLLDKADEAVKISRQREKKTSTLRGLTQINLFFEASTRTQASFELAGKRLGADVMNMSVGNSSVKKGETLIDTAMTLNAMRPDVLVIRHSSAGAAALLAQKVSCSVVNAGDGQHEHPTQALLDALTIRRAKGKLSRIIVAICGDVLHSRVARSNILLLNAMGARVRVVAPATLLPAGIAEMGVEVFHSMREGLKDADVVMMLRLQRERMSGAFVPSVREYYHFYGLDAETLKAAKDDALVMHPGPMNRGVEIASEVADGPQSVIAEQVEMGVAVRMAVMETLLVSQNQGPRSDGMMA.

Arg59 and Thr60 together coordinate carbamoyl phosphate. Lys87 is an L-aspartate binding site. Carbamoyl phosphate-binding residues include Arg109, His137, and Gln140. Residues Arg170 and Arg224 each coordinate L-aspartate. Carbamoyl phosphate contacts are provided by Gly265 and Pro266.

This sequence belongs to the aspartate/ornithine carbamoyltransferase superfamily. ATCase family. As to quaternary structure, heterododecamer (2C3:3R2) of six catalytic PyrB chains organized as two trimers (C3), and six regulatory PyrI chains organized as three dimers (R2).

It catalyses the reaction carbamoyl phosphate + L-aspartate = N-carbamoyl-L-aspartate + phosphate + H(+). Its pathway is pyrimidine metabolism; UMP biosynthesis via de novo pathway; (S)-dihydroorotate from bicarbonate: step 2/3. Its function is as follows. Catalyzes the condensation of carbamoyl phosphate and aspartate to form carbamoyl aspartate and inorganic phosphate, the committed step in the de novo pyrimidine nucleotide biosynthesis pathway. The polypeptide is Aspartate carbamoyltransferase catalytic subunit (Rhizobium johnstonii (strain DSM 114642 / LMG 32736 / 3841) (Rhizobium leguminosarum bv. viciae)).